The sequence spans 745 residues: Arf-GAP with coiled-coil, ANK repeat and PH domain-containing protein 1 (745 aa).

A BAR domain is found at 1 to 226; it reads MTVKLDFEEC…RKELGGQLHQ (226 aa). Residues 1 to 382 are required for formation of endosomal tubules when overexpressed with PIP5K1C; that stretch reads MTVKLDFEEC…RGLGQGSGHL (382 aa). The 96-residue stretch at 265 to 360 folds into the PH domain; sequence GLVMEGHLFK…WVSAVQSSIA (96 aa). In terms of domain architecture, Arf-GAP spans 405–527; that stretch reads GHVAAQVQSV…KFLTKLPEIR (123 aa). Residues 405–745 are required for interaction with GULP1; that stretch reads GHVAAQVQSV…SRRSHDLHTL (341 aa). Residues 420–443 form a C4-type zinc finger; it reads CCDCREPAPEWASINLGVTLCIQC. A 3'-nitrotyrosine modification is found at Tyr-485. Positions 525–567 are prevents interaction with ITGB1 when S-554 is not phosphorylated; sequence EIRGRRGGRGPPRGHPPVPPKPGLIRPKPGSFRSKPEPPSEDL. Residues 525-569 are disordered; sequence EIRGRRGGRGPPRGHPPVPPKPGLIRPKPGSFRSKPEPPSEDLQS. The segment covering 537-546 has biased composition (pro residues); the sequence is RGHPPVPPKP. Ser-555 is subject to Phosphoserine; by PKB. ANK repeat units follow at residues 607–640, 644–673, and 677–707; these read ENAT…NVNQ, QGRG…DLGV, and EGRD…EADA.

In terms of assembly, banana-shaped homodimer laterally assembling into tetramers, the tetramers further pack helically onto the membrane. Interacts with GTP-bound ARF6. Interacts with third cytoplasmic loop of SLC2A4/GLUT4. Interacts with CLTC. Interacts with GULP1. Forms a complex with GDP-bound ARF6 and GULP1. Interacts with ITGB1; required for ITGB1 recycling. In terms of processing, phosphorylation at Ser-555 by PKB is required for interaction with ITGB1, export of ITGB1 from recycling endosomes to the cell surface and ITGB1-dependent cell migration.

The protein localises to the recycling endosome membrane. GAP activity stimulated by phosphatidylinositol 4,5-bisphosphate (PIP2) and phosphatidic acid. GTPase-activating protein (GAP) for ADP ribosylation factor 6 (ARF6) required for clathrin-dependent export of proteins from recycling endosomes to trans-Golgi network and cell surface. Required for regulated export of ITGB1 from recycling endosomes to the cell surface and ITGB1-dependent cell migration. The polypeptide is Arf-GAP with coiled-coil, ANK repeat and PH domain-containing protein 1 (ACAP1) (Bos taurus (Bovine)).